Reading from the N-terminus, the 362-residue chain is sn-glycerol-3-phosphate import ATP-binding protein UgpC (362 aa).

The ABC transporter domain maps to leucine 4–isoleucine 235. Glycine 37 to serine 44 contacts ATP.

The protein belongs to the ABC transporter superfamily. sn-glycerol-3-phosphate importer (TC 3.A.1.1.3) family. As to quaternary structure, the complex is composed of two ATP-binding proteins (UgpC), two transmembrane proteins (UgpA and UgpE) and a solute-binding protein (UgpB).

The protein resides in the cell inner membrane. It catalyses the reaction sn-glycerol 3-phosphate(out) + ATP + H2O = sn-glycerol 3-phosphate(in) + ADP + phosphate + H(+). Its function is as follows. Part of the ABC transporter complex UgpBAEC involved in sn-glycerol-3-phosphate (G3P) import. Responsible for energy coupling to the transport system. The sequence is that of sn-glycerol-3-phosphate import ATP-binding protein UgpC from Bordetella parapertussis (strain 12822 / ATCC BAA-587 / NCTC 13253).